Reading from the N-terminus, the 273-residue chain is Phosphate import ATP-binding protein PstB (273 aa).

The 240-residue stretch at 18 to 257 (ISLQNVTISY…EFDKTKKIFN (240 aa)) folds into the ABC transporter domain. 50-57 (GPSGCGKS) is an ATP binding site.

This sequence belongs to the ABC transporter superfamily. Phosphate importer (TC 3.A.1.7) family. The complex is composed of two ATP-binding proteins (PstB), two transmembrane proteins (PstC and PstA) and a solute-binding protein (PstS).

It is found in the cell inner membrane. The catalysed reaction is phosphate(out) + ATP + H2O = ADP + 2 phosphate(in) + H(+). Functionally, part of the ABC transporter complex PstSACB involved in phosphate import. Responsible for energy coupling to the transport system. The protein is Phosphate import ATP-binding protein PstB of Prochlorococcus marinus (strain SARG / CCMP1375 / SS120).